Consider the following 205-residue polypeptide: Regulator of G-protein signaling 4 (205 aa).

Residues Cys2, Cys12, and Cys95 are each lipidated (S-palmitoyl cysteine). Residues 62–178 enclose the RGS domain; that stretch reads SLENLISHEC…LKSRFYLDLV (117 aa).

In terms of processing, palmitoylated on Cys-2 and/or Cys-12. Post-translationally, phosphorylated by cyclic GMP-dependent protein kinase.

Its function is as follows. Inhibits signal transduction by increasing the GTPase activity of G protein alpha subunits thereby driving them into their inactive GDP-bound form. Activity on G(z)-alpha is inhibited by phosphorylation of the G-protein. Activity on G(z)-alpha and G(i)-alpha-1 is inhibited by palmitoylation of the G-protein. In Pongo abelii (Sumatran orangutan), this protein is Regulator of G-protein signaling 4 (RGS4).